The following is a 287-amino-acid chain: Putative sugar uptake protein LJ_0170 (287 aa).

10 consecutive transmembrane segments (helical) span residues 4-23, 28-50, 56-78, 91-108, 118-137, 150-169, 179-198, 211-230, 240-259, and 266-285; these read VYLF…IASV, VYNQ…MAIM, WSLF…GQYI, ISTG…VLAF, LYGF…TSFT, VSTI…SSSI, SIFF…YTLV, VQSG…YILS, FVIS…IFLH, and GLIF…MLTT.

This sequence belongs to the GRP transporter (TC 2.A.7.5) family.

Its subcellular location is the cell membrane. The sequence is that of Putative sugar uptake protein LJ_0170 from Lactobacillus johnsonii (strain CNCM I-12250 / La1 / NCC 533).